We begin with the raw amino-acid sequence, 432 residues long: Small ribosomal subunit protein uS5m (432 aa).

Positions 110–130 (AGARKGRGKRTKKKKRKDLNR) are disordered. Residues 113–127 (RKGRGKRTKKKKRKD) show a composition bias toward basic residues. Residues 220 to 284 (FDTRILEVRN…NRAIHYLHYI (65 aa)) form the S5 DRBM domain.

Belongs to the universal ribosomal protein uS5 family. As to quaternary structure, component of the mitochondrial ribosome small subunit (28S) which comprises a 12S rRNA and about 30 distinct proteins.

The protein resides in the mitochondrion. The sequence is that of Small ribosomal subunit protein uS5m (Mrps5) from Mus musculus (Mouse).